The chain runs to 563 residues: DNA mismatch repair protein MutL (563 aa).

Belongs to the DNA mismatch repair MutL/HexB family.

Its function is as follows. This protein is involved in the repair of mismatches in DNA. It is required for dam-dependent methyl-directed DNA mismatch repair. May act as a 'molecular matchmaker', a protein that promotes the formation of a stable complex between two or more DNA-binding proteins in an ATP-dependent manner without itself being part of a final effector complex. The polypeptide is DNA mismatch repair protein MutL (Trichormus variabilis (strain ATCC 29413 / PCC 7937) (Anabaena variabilis)).